We begin with the raw amino-acid sequence, 425 residues long: Phosphomethylpyrimidine synthase (425 aa).

Residues Met-94, Tyr-123, His-162, 184–186 (SRG), 225–228 (NGMR), and Glu-264 contribute to the substrate site. His-268 is a Zn(2+) binding site. Tyr-291 lines the substrate pocket. His-332 contacts Zn(2+). [4Fe-4S] cluster-binding residues include Cys-407, Cys-410, and Cys-414.

The protein belongs to the ThiC family. [4Fe-4S] cluster serves as cofactor.

The catalysed reaction is 5-amino-1-(5-phospho-beta-D-ribosyl)imidazole + S-adenosyl-L-methionine = 4-amino-2-methyl-5-(phosphooxymethyl)pyrimidine + CO + 5'-deoxyadenosine + formate + L-methionine + 3 H(+). It participates in cofactor biosynthesis; thiamine diphosphate biosynthesis. Functionally, catalyzes the synthesis of the hydroxymethylpyrimidine phosphate (HMP-P) moiety of thiamine from aminoimidazole ribotide (AIR) in a radical S-adenosyl-L-methionine (SAM)-dependent reaction. The polypeptide is Phosphomethylpyrimidine synthase (Methanocorpusculum labreanum (strain ATCC 43576 / DSM 4855 / Z)).